Here is a 75-residue protein sequence, read N- to C-terminus: Translational regulator CsrA (75 aa).

The protein belongs to the CsrA/RsmA family. Homodimer; the beta-strands of each monomer intercalate to form a hydrophobic core, while the alpha-helices form wings that extend away from the core.

It is found in the cytoplasm. A translational regulator that binds mRNA to regulate translation initiation and/or mRNA stability. Usually binds in the 5'-UTR at or near the Shine-Dalgarno sequence preventing ribosome-binding, thus repressing translation. Its main target seems to be the major flagellin gene, while its function is anatagonized by FliW. In Acetivibrio thermocellus (strain ATCC 27405 / DSM 1237 / JCM 9322 / NBRC 103400 / NCIMB 10682 / NRRL B-4536 / VPI 7372) (Clostridium thermocellum), this protein is Translational regulator CsrA.